The chain runs to 856 residues: Nuclear valosin-containing protein-like (856 aa).

The interaction with RPL5 stretch occupies residues 1–220 (MKPRPAGFVD…SLLESDMKRK (220 aa)). The Nucleolar localization signal signature appears at 49–52 (RRKR). Lys-70 carries the post-translational modification N6-acetyllysine. A disordered region spans residues 84 to 175 (AKRARQGEED…AKDSEGGWFI (92 aa)). Residues 85 to 88 (KRAR) carry the Nuclear localization signal motif. The segment covering 92–111 (EDNEYTESYSDDDSSMEDYP) has biased composition (acidic residues). 2 stretches are compositionally biased toward polar residues: residues 114–124 (QSANHMNSSLL) and 133–158 (DSVSNTPEMEQRETTSSTPRISSKTG). Ser-134 carries the phosphoserine modification. Thr-138 is modified (phosphothreonine). Residue Lys-156 is modified to N6-acetyllysine. Residue Ser-191 is modified to Phosphoserine. The segment at 197 to 236 (PKKPITEIQDSKDSSLLESDMKRKGKLKNKGSKRKKEDLQ) is disordered. Positions 205-218 (QDSKDSSLLESDMK) are enriched in basic and acidic residues. A Glycyl lysine isopeptide (Lys-Gly) (interchain with G-Cter in SUMO2) cross-link involves residue Lys-208. Ser-211 and Ser-215 each carry phosphoserine. The Nuclear localization signal signature appears at 218–232 (KRKGKLKNKGSKRKK). A compositionally biased stretch (basic residues) spans 219–230 (RKGKLKNKGSKR). Positions 267 to 474 (VGGNDMTLKE…LTPGFVGADL (208 aa)) are interaction with WDR74. An ATP-binding site is contributed by 305–312 (GPPGCGKT). Residues 496-523 (QQKKNPEMEDLPSKGVQEERLGTEPTSE) form a disordered region. An ATP-binding site is contributed by 622–629 (GPPGCGKT).

It belongs to the AAA ATPase family. As to quaternary structure, interacts with NCL/nucleolin. Isoform 1 and isoform 2 interact with TERT and isoform 1 exhibits a higher binding affinity for TERT compared to isoform 2. Isoform 1 interacts with MTREX in an ATP-dependent manner; the interaction is required to associate NVL with nuclear RNA exosome. Isoform 1 interacts with RPL5 in an ATP-dependent manner. Interacts with WDR74 (through WDR repeats); the interaction is independent of RNA or pre-60S ribosome particles. As to expression, widely expressed. Highest level of expression in heart, placenta, skeletal muscle, pancreas and retina.

It is found in the nucleus. The protein localises to the nucleoplasm. It localises to the nucleolus. Functionally, participates in the assembly of the telomerase holoenzyme and effecting of telomerase activity via its interaction with TERT. Involved in both early and late stages of the pre-rRNA processing pathways. Spatiotemporally regulates 60S ribosomal subunit biogenesis in the nucleolus. Catalyzes the release of specific assembly factors, such as WDR74, from pre-60S ribosomal particles through the ATPase activity. This Homo sapiens (Human) protein is Nuclear valosin-containing protein-like.